The following is a 314-amino-acid chain: Olfactory receptor 5P76 (314 aa).

The Extracellular segment spans residues 1–28 (MAFLEDGNHTAVTGFILLGLTDDPVLRV). Asn8 carries an N-linked (GlcNAc...) asparagine glycan. Residues 29-49 (VLFVIILCIYLVTVSGNLSTI) traverse the membrane as a helical segment. Topologically, residues 50 to 57 (LLIRVSSQ) are cytoplasmic. Residues 58 to 78 (LHHPMYFFLSHLASADIGYSS) traverse the membrane as a helical segment. Residues 79 to 102 (SVTPNMLVNFLVERNTISYLGCGI) lie on the Extracellular side of the membrane. Cys100 and Cys192 are joined by a disulfide. A helical membrane pass occupies residues 103–123 (QLGSAVFFGTVECFLLAAMAY). The Cytoplasmic portion of the chain corresponds to 124 to 136 (DRFIAICSPLLYS). The helical transmembrane segment at 137–157 (NKMSTQVCVQLLVGSYIGGFL) threads the bilayer. The Extracellular segment spans residues 158–199 (NASSFTLSFFSLVFCGPNRVNHFFCDFAPLVKLSCSDVSVPA). Residues 200–220 (VVPSFTAGSIIIVTIFVIAVS) form a helical membrane-spanning segment. Topologically, residues 221 to 240 (YIYILITILKMRSTEGRQKA) are cytoplasmic. The helical transmembrane segment at 241-261 (FSTCTSHLTAVTLFYGTITFI) threads the bilayer. Residues 262–274 (YVMPKSSYSTDQN) are Extracellular-facing. The helical transmembrane segment at 275 to 295 (KVVSVFYMVVVPMLNPLIYSL) threads the bilayer. Residues 296 to 314 (RNKEIKGALKRQLAKNTFS) lie on the Cytoplasmic side of the membrane.

Belongs to the G-protein coupled receptor 1 family.

The protein localises to the cell membrane. Potential odorant receptor. This is Olfactory receptor 5P76 from Mus musculus (Mouse).